Reading from the N-terminus, the 90-residue chain is MSSTWIKFLFILTLVLLPYSVFSVNIFAGPENVIKEPNCTMYKSKSECSNIAENPVCADDRNTYYNECYFCIEKVVEKLKYRYHGICIYK.

A signal peptide spans 1–23 (MSSTWIKFLFILTLVLLPYSVFS). Positions 33–89 (VIKEPNCTMYKSKSECSNIAENPVCADDRNTYYNECYFCIEKVVEKLKYRYHGICIY) constitute a Kazal-like domain. N-linked (GlcNAc...) asparagine glycosylation occurs at N38.

In terms of tissue distribution, luminal fluid and mucosal folds of the seminal vesicles (at protein level). Not detected in brain, heart, lung, liver, kidney, stomach, small intestine, muscle, skin, thymus, placenta or bladder.

The protein resides in the secreted. Functionally, does not function as an inhibitor of trypsin, chymotrypsin, subtilisin or elastase. Binds sperm and enhances sperm motility. May act as a decapacitation factor, suppresses BSA-stimulated sperm capacitation and blocks sperm-oocyte interactions in vitro. The protein is Serine protease inhibitor kazal-like protein, minor form (Spinkl) of Mus musculus (Mouse).